A 101-amino-acid polypeptide reads, in one-letter code: NADH-quinone oxidoreductase subunit K (101 aa).

3 helical membrane-spanning segments follow: residues 4-24, 30-50, and 62-82; these read LGHL…GIFL, IVLL…FIAF, and FVFF…AILV.

The protein belongs to the complex I subunit 4L family. In terms of assembly, NDH-1 is composed of 14 different subunits. Subunits NuoA, H, J, K, L, M, N constitute the membrane sector of the complex.

Its subcellular location is the cell inner membrane. The catalysed reaction is a quinone + NADH + 5 H(+)(in) = a quinol + NAD(+) + 4 H(+)(out). NDH-1 shuttles electrons from NADH, via FMN and iron-sulfur (Fe-S) centers, to quinones in the respiratory chain. The immediate electron acceptor for the enzyme in this species is believed to be ubiquinone. Couples the redox reaction to proton translocation (for every two electrons transferred, four hydrogen ions are translocated across the cytoplasmic membrane), and thus conserves the redox energy in a proton gradient. The protein is NADH-quinone oxidoreductase subunit K of Xylella fastidiosa (strain 9a5c).